Consider the following 119-residue polypeptide: MSRVKRGVTARARHKKVLDQAKGYRGRRKNVYRIAKQAVMKAGQYAYRDRRQRKRQFRALWIARINAAAREVGLTYSTFMNGLKKAAIEVDRKVLADLAVFDKPAFAALADQARAKLAA.

Belongs to the bacterial ribosomal protein bL20 family.

Its function is as follows. Binds directly to 23S ribosomal RNA and is necessary for the in vitro assembly process of the 50S ribosomal subunit. It is not involved in the protein synthesizing functions of that subunit. In Aromatoleum aromaticum (strain DSM 19018 / LMG 30748 / EbN1) (Azoarcus sp. (strain EbN1)), this protein is Large ribosomal subunit protein bL20.